A 371-amino-acid chain; its full sequence is Glycosyltransferase 8 domain-containing protein 1 (371 aa).

Residues 1–5 (MSFRK) lie on the Cytoplasmic side of the membrane. Residues 6–26 (VTIIIWALAVILFLLALHHNF) traverse the membrane as a helical; Signal-anchor for type II membrane protein segment. Over 27 to 371 (LSLSSLLRND…RRHMDTSNIK (345 aa)) the chain is Lumenal. Residue N257 is glycosylated (N-linked (GlcNAc...) asparagine).

This sequence belongs to the glycosyltransferase 8 family.

The protein localises to the membrane. The polypeptide is Glycosyltransferase 8 domain-containing protein 1 (Glt8d1) (Rattus norvegicus (Rat)).